Reading from the N-terminus, the 332-residue chain is Heterogeneous nuclear ribonucleoprotein A/B (332 aa).

The tract at residues 1–66 is disordered; sequence MSEAGEEQPM…DQINASKNEE (66 aa). The segment covering 29–49 has biased composition (low complexity); that stretch reads GRGWTGAAAGAGGATAAPPSG. RRM domains lie at 69–154 and 153–233; these read GKMF…PVKK and KKIF…QPKE. Residue Ser-81 is modified to Phosphoserine. Residues Lys-130 and Lys-203 each participate in a glycyl lysine isopeptide (Lys-Gly) (interchain with G-Cter in SUMO2) cross-link. Position 215 is an N6-acetyllysine (Lys-215). The interval 235 to 268 is disordered; that stretch reads YQQQQYGSGGRGNRNRGNRGSGGGGGGGGQSQSW. Position 242 is a phosphoserine (Ser-242). A Dimethylated arginine; alternate modification is found at Arg-245. Arg-245 is modified (omega-N-methylarginine; alternate). Residues Arg-250, Gly-251, Arg-253, and Gly-254 each carry the omega-N-methylarginine modification. A compositionally biased stretch (gly residues) spans 253–264; sequence RGSGGGGGGGGQ. Phosphoserine occurs at positions 255 and 256. An N6-acetyllysine mark is found at Gly-271, Tyr-272, and Lys-318. A disordered region spans residues 311-332; it reads QGSTNYGKSQRRGGHQNNYKPY. Dimethylated arginine; alternate is present on Arg-322. Arg-322 is modified (omega-N-methylarginine; alternate). The residue at position 322 (Arg-322) is an Asymmetric dimethylarginine; alternate.

In terms of assembly, identified in a IGF2BP1-dependent mRNP granule complex containing untranslated mRNAs. Interacts with APOBEC1. In terms of processing, dimethylation at Arg-322 is probably asymmetric. Ubiquitous.

The protein localises to the nucleus. Its subcellular location is the cytoplasm. Binds single-stranded RNA. Has a high affinity for G-rich and U-rich regions of hnRNA. Also binds to APOB mRNA transcripts around the RNA editing site. The protein is Heterogeneous nuclear ribonucleoprotein A/B (HNRNPAB) of Homo sapiens (Human).